The primary structure comprises 717 residues: F-box only protein 42 (717 aa).

Residues methionine 1 to glutamate 30 show a composition bias toward acidic residues. The segment at methionine 1 to methionine 47 is disordered. Residues glutamate 31–histidine 43 show a composition bias toward basic and acidic residues. An F-box domain is found at asparagine 44–phenylalanine 93. 4 Kelch repeats span residues serine 132 to aspartate 184, leucine 186 to aspartate 242, methionine 244 to aspartate 293, and threonine 295 to histidine 342. Disordered stretches follow at residues arginine 361–glutamate 472 and proline 508–threonine 539. Over residues proline 363–serine 376 the composition is skewed to low complexity. A phosphoserine mark is found at serine 365 and serine 373. Phosphothreonine is present on threonine 378. Polar residues-rich tracts occupy residues glutamine 416–glycine 426 and serine 455–serine 469. Serine 552 carries the post-translational modification Phosphoserine. The segment covering glycine 570–glycine 596 has biased composition (low complexity). The interval glycine 570–leucine 635 is disordered.

Component of some SCF complex, composed of CUL1, SKP1, RBX1 and FBXO42. Interacts (via the kelch domain) with p53/TP53; interaction is direct.

Functionally, substrate-recognition component of some SCF (SKP1-CUL1-F-box protein)-type E3 ubiquitin ligase complex. Specifically recognizes p53/TP53, promoting its ubiquitination and degradation. In Pongo abelii (Sumatran orangutan), this protein is F-box only protein 42 (FBXO42).